The following is a 62-amino-acid chain: Large ribosomal subunit protein uL30 (62 aa).

It belongs to the universal ribosomal protein uL30 family. As to quaternary structure, part of the 50S ribosomal subunit.

This Ruegeria pomeroyi (strain ATCC 700808 / DSM 15171 / DSS-3) (Silicibacter pomeroyi) protein is Large ribosomal subunit protein uL30.